A 358-amino-acid chain; its full sequence is Alpha-2-HS-glycoprotein (358 aa).

A signal peptide spans 1-18 (MKFFVLFLCLVQLWGCHS). The 107-residue stretch at 27–133 (ERNPACDDPE…QFSVVFAKCE (107 aa)) folds into the Cystatin fetuin-A-type 1 domain. 6 disulfides stabilise this stretch: C32–C349, C89–C100, C114–C132, C146–C149, C208–C218, and C229–C246. N99 carries an N-linked (GlcNAc...) asparagine glycan. S134 carries the phosphoserine modification. T135 bears the Phosphothreonine mark. S138 carries the post-translational modification Phosphoserine. The 111-residue stretch at 144–254 (KVCPQCPLLT…TCTVFPTQPV (111 aa)) folds into the Cystatin fetuin-A-type 2 domain. 2 N-linked (GlcNAc...) asparagine glycosylation sites follow: N156 and N176. The segment at 257-288 (LPQPDAASSANPPPAADPAVSPPSSPSVPVDS) is disordered. Residues 267-282 (NPPPAADPAVSPPSSP) show a composition bias toward pro residues. Phosphoserine is present on residues S318 and S320. Residues 320–350 (SGEAFGPRQKPKVTHPGVASGVGPVPPPPCP) form a disordered region.

The protein belongs to the fetuin family. Post-translationally, phosphorylated by FAM20C in the extracellular medium. Bone marrow.

Its subcellular location is the secreted. In Cavia porcellus (Guinea pig), this protein is Alpha-2-HS-glycoprotein (AHSG).